The following is a 214-amino-acid chain: Probable chemoreceptor glutamine deamidase CheD (214 aa).

This sequence belongs to the CheD family.

It carries out the reaction L-glutaminyl-[protein] + H2O = L-glutamyl-[protein] + NH4(+). Probably deamidates glutamine residues to glutamate on methyl-accepting chemotaxis receptors (MCPs), playing an important role in chemotaxis. This Vibrio vulnificus (strain YJ016) protein is Probable chemoreceptor glutamine deamidase CheD.